Here is a 122-residue protein sequence, read N- to C-terminus: Small ribosomal subunit protein uS10y (122 aa).

The protein belongs to the universal ribosomal protein uS10 family.

The sequence is that of Small ribosomal subunit protein uS10y (RPS20B) from Arabidopsis thaliana (Mouse-ear cress).